We begin with the raw amino-acid sequence, 395 residues long: Tryptophan--tRNA ligase (395 aa).

ATP-binding positions include 8–10 and 16–17; these read RPT and GH. The short motif at 9–17 is the 'HIGH' region element; that stretch reads PTGKLHLGH. The segment at 117–179 is insert; that stretch reads RLTDLEKEFK…EIEPEILKRL (63 aa). D204 provides a ligand contact to L-tryptophan. ATP is bound by residues 216–218, I254, and 261–265; these read GED and KMSKS. The 'KMSKS' region motif lies at 261–265; it reads KMSKS.

The protein belongs to the class-I aminoacyl-tRNA synthetase family. As to quaternary structure, homodimer.

The protein resides in the cytoplasm. It catalyses the reaction tRNA(Trp) + L-tryptophan + ATP = L-tryptophyl-tRNA(Trp) + AMP + diphosphate + H(+). In terms of biological role, catalyzes the attachment of tryptophan to tRNA(Trp). The protein is Tryptophan--tRNA ligase of Aquifex aeolicus (strain VF5).